The primary structure comprises 248 residues: Ubiquinone/menaquinone biosynthesis C-methyltransferase UbiE (248 aa).

Residues Ser-68 and Asp-92 each contribute to the S-adenosyl-L-methionine site.

The protein belongs to the class I-like SAM-binding methyltransferase superfamily. MenG/UbiE family.

It catalyses the reaction a 2-demethylmenaquinol + S-adenosyl-L-methionine = a menaquinol + S-adenosyl-L-homocysteine + H(+). The enzyme catalyses a 2-methoxy-6-(all-trans-polyprenyl)benzene-1,4-diol + S-adenosyl-L-methionine = a 5-methoxy-2-methyl-3-(all-trans-polyprenyl)benzene-1,4-diol + S-adenosyl-L-homocysteine + H(+). The protein operates within quinol/quinone metabolism; menaquinone biosynthesis; menaquinol from 1,4-dihydroxy-2-naphthoate: step 2/2. Its pathway is cofactor biosynthesis; ubiquinone biosynthesis. Its function is as follows. Methyltransferase required for the conversion of demethylmenaquinol (DMKH2) to menaquinol (MKH2) and the conversion of 2-polyprenyl-6-methoxy-1,4-benzoquinol (DDMQH2) to 2-polyprenyl-3-methyl-6-methoxy-1,4-benzoquinol (DMQH2). This Rickettsia rickettsii (strain Iowa) protein is Ubiquinone/menaquinone biosynthesis C-methyltransferase UbiE.